Consider the following 670-residue polypeptide: Thrombospondin-type laminin G domain and EAR repeat-containing protein (670 aa).

Positions 1-20 (MSALLMLCAVLLLLGTPSRG) are cleaved as a signal peptide. The region spanning 59 to 278 (GLQFSATEPR…KVTLGSRPPC (220 aa)) is the Laminin G-like domain. EAR repeat units lie at residues 314–359 (DYVE…KWTD), 361–409 (KFVS…KWSP), 413–461 (KFTL…RWNP), 465–513 (LFEA…IWLV), 515–571 (AFQL…ELNI), 575–623 (TFVK…RWQG), and 626–669 (GFVA…KLRT). N-linked (GlcNAc...) asparagine glycosylation is present at Asn498.

As to expression, in the organ of Corti, expression at postnatal day 1 (P1) is restricted to the basal region of the stereocilia of inner and outer hair cells (at protein level). Expressed in the organ of Corti at P1 and P7, in cochlear ganglion, stria vascularis and vestibular ends at P7, and in inferior colliculus, remaining brainstem, cerebellum, brain hemispheres and retina at P1, P7 and in the adult. Also detected in adult liver, lung, kidney, intestine and testis but not in heart or skeletal muscle.

The protein resides in the secreted. Its subcellular location is the cell surface. It is found in the cell projection. The protein localises to the stereocilium. Functionally, plays a critical role in tooth and hair follicle morphogenesis through regulation of the Notch signaling pathway. May play a role in development or function of the auditory system. In Mus musculus (Mouse), this protein is Thrombospondin-type laminin G domain and EAR repeat-containing protein.